A 631-amino-acid polypeptide reads, in one-letter code: Mu-like prophage FluMu protein gp42 (631 aa).

Transmembrane regions (helical) follow at residues 56-76 (LGNI…TMVG) and 385-405 (GLAD…PVYV). Positions 425 to 453 (IEDGRDKDKKTQKKNKPPRPKRGRGSVRS) are disordered. A compositionally biased stretch (basic residues) spans 434 to 449 (KTQKKNKPPRPKRGRG). 3 consecutive transmembrane segments (helical) span residues 455–475 (VAAV…VTTA), 495–515 (SKAV…TVLM), and 543–563 (ALIP…GWLG).

This sequence to phage Mu protein gp42.

It is found in the cell membrane. The polypeptide is Mu-like prophage FluMu protein gp42 (Haemophilus influenzae (strain ATCC 51907 / DSM 11121 / KW20 / Rd)).